Consider the following 113-residue polypeptide: Iron-sulfur cluster insertion protein ErpA (113 aa).

Residues Cys41, Cys105, and Cys107 each contribute to the iron-sulfur cluster site.

The protein belongs to the HesB/IscA family. In terms of assembly, homodimer. It depends on iron-sulfur cluster as a cofactor.

Functionally, required for insertion of 4Fe-4S clusters for at least IspG. This Histophilus somni (strain 2336) (Haemophilus somnus) protein is Iron-sulfur cluster insertion protein ErpA.